We begin with the raw amino-acid sequence, 394 residues long: Elongation factor Tu (394 aa).

A tr-type G domain is found at 10–204; sequence KPHINVGTIG…ALDKYIPEPQ (195 aa). The segment at 19-26 is G1; it reads GHVDHGKT. 19 to 26 contributes to the GTP binding site; the sequence is GHVDHGKT. Thr-26 contacts Mg(2+). Residues 60 to 64 are G2; the sequence is GITIN. The G3 stretch occupies residues 81-84; the sequence is DCPG. Residues 81-85 and 136-139 each bind GTP; these read DCPGH and NKCD. The tract at residues 136 to 139 is G4; that stretch reads NKCD. The interval 174 to 176 is G5; the sequence is SAL.

Belongs to the TRAFAC class translation factor GTPase superfamily. Classic translation factor GTPase family. EF-Tu/EF-1A subfamily. Monomer.

It is found in the cytoplasm. It carries out the reaction GTP + H2O = GDP + phosphate + H(+). GTP hydrolase that promotes the GTP-dependent binding of aminoacyl-tRNA to the A-site of ribosomes during protein biosynthesis. The chain is Elongation factor Tu from Hamiltonella defensa subsp. Acyrthosiphon pisum (strain 5AT).